A 1065-amino-acid polypeptide reads, in one-letter code: Carbamoyl phosphate synthase large chain (1065 aa).

Residues 1–401 (MPKRTDIETI…AMLKAVRSLE (401 aa)) form a carboxyphosphate synthetic domain region. R129, R169, G175, G176, K208, I210, E215, G241, I242, H243, Q284, and E298 together coordinate ATP. One can recognise an ATP-grasp 1 domain in the interval 133–327 (RNLMYELGAP…IAKLAAKIAV (195 aa)). Residues Q284, E298, and N300 each coordinate Mg(2+). The Mn(2+) site is built by Q284, E298, and N300. Residues 402–546 (TGQVHLELKH…YGTYEEENES (145 aa)) form an oligomerization domain region. The tract at residues 547 to 929 (IKSEKPSVVV…ALYKGLVAAG (383 aa)) is carbamoyl phosphate synthetic domain. The 191-residue stretch at 671–861 (EQALRDLNIP…MANIATKAIL (191 aa)) folds into the ATP-grasp 2 domain. ATP is bound by residues R707, R746, L748, E752, G777, V778, H779, S780, Q820, and E832. Residues Q820, E832, and N834 each contribute to the Mg(2+) site. The Mn(2+) site is built by Q820, E832, and N834. The 136-residue stretch at 930–1065 (MEIRTEGTVL…EEMPKAEVVH (136 aa)) folds into the MGS-like domain. Residues 930–1065 (MEIRTEGTVL…EEMPKAEVVH (136 aa)) form an allosteric domain region.

Belongs to the CarB family. Composed of two chains; the small (or glutamine) chain promotes the hydrolysis of glutamine to ammonia, which is used by the large (or ammonia) chain to synthesize carbamoyl phosphate. Tetramer of heterodimers (alpha,beta)4. It depends on Mg(2+) as a cofactor. Mn(2+) is required as a cofactor.

The catalysed reaction is hydrogencarbonate + L-glutamine + 2 ATP + H2O = carbamoyl phosphate + L-glutamate + 2 ADP + phosphate + 2 H(+). It catalyses the reaction hydrogencarbonate + NH4(+) + 2 ATP = carbamoyl phosphate + 2 ADP + phosphate + 2 H(+). It functions in the pathway amino-acid biosynthesis; L-arginine biosynthesis; carbamoyl phosphate from bicarbonate: step 1/1. Its pathway is pyrimidine metabolism; UMP biosynthesis via de novo pathway; (S)-dihydroorotate from bicarbonate: step 1/3. Functionally, large subunit of the glutamine-dependent carbamoyl phosphate synthetase (CPSase). CPSase catalyzes the formation of carbamoyl phosphate from the ammonia moiety of glutamine, carbonate, and phosphate donated by ATP, constituting the first step of 2 biosynthetic pathways, one leading to arginine and/or urea and the other to pyrimidine nucleotides. The large subunit (synthetase) binds the substrates ammonia (free or transferred from glutamine from the small subunit), hydrogencarbonate and ATP and carries out an ATP-coupled ligase reaction, activating hydrogencarbonate by forming carboxy phosphate which reacts with ammonia to form carbamoyl phosphate. The polypeptide is Carbamoyl phosphate synthase large chain (Lysinibacillus sphaericus (strain C3-41)).